The following is an 85-amino-acid chain: Small protein YqaH (85 aa).

Interacts with domain IV of DnaA and with Spo0A.

Its function is as follows. Binds to and counteracts DnaA replication initiation activity; overexpression decreases the number of replication initiation events. Also antagonizes DnaA's transcriptional regulation activity. Ectopic expression during exponential phase stops cell growth 2 hours after induction, leading to filamentation, aberrant chromosome segregation and septoid-trapped nucleoids. Overexpression during sporulation onset leads to dramatic reductions in spore formation. The polypeptide is Small protein YqaH (yqaH) (Bacillus subtilis (strain 168)).